Here is a 139-residue protein sequence, read N- to C-terminus: Small ribosomal subunit protein uS11 (139 aa).

Residues 118-139 are disordered; sequence EDVTPIPHDGTRPKGGRRGRRV.

Belongs to the universal ribosomal protein uS11 family. Part of the 30S ribosomal subunit.

Functionally, located on the platform of the 30S subunit. This Thermococcus sibiricus (strain DSM 12597 / MM 739) protein is Small ribosomal subunit protein uS11.